The sequence spans 86 residues: Small ribosomal subunit protein bS18 (86 aa).

Belongs to the bacterial ribosomal protein bS18 family. Part of the 30S ribosomal subunit. Forms a tight heterodimer with protein bS6.

Its function is as follows. Binds as a heterodimer with protein bS6 to the central domain of the 16S rRNA, where it helps stabilize the platform of the 30S subunit. The polypeptide is Small ribosomal subunit protein bS18 (Protochlamydia amoebophila (strain UWE25)).